A 451-amino-acid chain; its full sequence is Serine--tRNA ligase, cytoplasmic (451 aa).

236 to 238 (TSE) serves as a coordination point for L-serine. ATP is bound by residues 267 to 269 (RKE) and V283. L-serine is bound at residue E290. Residue 354–357 (ELVS) participates in ATP binding. T392 is an L-serine binding site.

This sequence belongs to the class-II aminoacyl-tRNA synthetase family. Type-1 seryl-tRNA synthetase subfamily. In terms of assembly, homodimer. The tRNA molecule binds across the dimer.

It localises to the cytoplasm. The enzyme catalyses tRNA(Ser) + L-serine + ATP = L-seryl-tRNA(Ser) + AMP + diphosphate + H(+). It catalyses the reaction tRNA(Sec) + L-serine + ATP = L-seryl-tRNA(Sec) + AMP + diphosphate + H(+). It participates in aminoacyl-tRNA biosynthesis; selenocysteinyl-tRNA(Sec) biosynthesis; L-seryl-tRNA(Sec) from L-serine and tRNA(Sec): step 1/1. Functionally, catalyzes the attachment of serine to tRNA(Ser). Is also able to aminoacylate tRNA(Sec) with serine, to form the misacylated tRNA L-seryl-tRNA(Sec), which will be further converted into selenocysteinyl-tRNA(Sec). This chain is Serine--tRNA ligase, cytoplasmic (serS), found in Dictyostelium discoideum (Social amoeba).